A 343-amino-acid chain; its full sequence is Envelope glycoprotein K (343 aa).

Positions 1–31 are cleaved as a signal peptide; that stretch reads MLLGGRTAYLSVLGLITAYAAFTIWYTLTAQ. Residues 32–118 lie on the Extracellular side of the membrane; sequence LHNPCVYATV…VVGTRNCRAY (87 aa). N-linked (GlcNAc...) asparagine; by host glycosylation is found at Asn-57 and Asn-89. A helical transmembrane segment spans residues 119 to 139; that stretch reads LWSVQLQMITGAWLIYIAFLC. At 140–213 the chain is on the cytoplasmic side; the sequence is LRQERRLLGP…DPIGFLCEHS (74 aa). Residues 214 to 234 traverse the membrane as a helical segment; it reads AALALIGLEVGTHFVARLLVV. Over 235 to 251 the chain is Extracellular; that stretch reads GTVTLVHTPCSQIYPIY. The chain crosses the membrane as a helical span at residues 252-272; that stretch reads LKLASWGFVVAVTIVEIVAII. Topologically, residues 273–303 are cytoplasmic; that stretch reads YEKPPKTGSSANPPTPATHGVKGLCTSCCST. A helical membrane pass occupies residues 304–324; sequence VLANLCGKLVYLLLVIGAVSI. Residues 325-343 lie on the Extracellular side of the membrane; that stretch reads LLHYEQRIQIGLLGESFSS.

It belongs to the alphaherpesvirinae glycoprotein K family. In terms of assembly, interacts (via UL20 interaction region) with protein UL20 homolog (via N-terminus); this interaction probably plays a role in the coordinate transport of protein UL20 homolog and gK to the trans-Golgi network (TGN), and is required for the cell surface expression of gK. N-glycosylated.

The protein localises to the host cell membrane. It localises to the host endosome membrane. It is found in the host Golgi apparatus membrane. Functionally, glycoprotein that probably modulates membrane fusion events during secondary envelopment of cytoplasmic capsids that bud into specific trans-Golgi network (TGN)-derived membranes. This Equine herpesvirus 1 (strain Ab4p) (EHV-1) protein is Envelope glycoprotein K (gK).